A 707-amino-acid chain; its full sequence is Polyribonucleotide nucleotidyltransferase (707 aa).

Positions 485 and 491 each coordinate Mg(2+). Positions 552–611 constitute a KH domain; that stretch reads PRIHTMKINSDKIKDVIGKGGAVIRALTEETGTTIEIEDDGTIKIAATEGAAAKEAIRRI. One can recognise an S1 motif domain in the interval 621 to 689; it reads GRIYTGKVMR…RQGRIRLSMK (69 aa).

Belongs to the polyribonucleotide nucleotidyltransferase family. As to quaternary structure, component of the RNA degradosome, which is a multiprotein complex involved in RNA processing and mRNA degradation. Requires Mg(2+) as cofactor.

It localises to the cytoplasm. It carries out the reaction RNA(n+1) + phosphate = RNA(n) + a ribonucleoside 5'-diphosphate. Its function is as follows. Involved in mRNA degradation. Catalyzes the phosphorolysis of single-stranded polyribonucleotides processively in the 3'- to 5'-direction. The protein is Polyribonucleotide nucleotidyltransferase of Photobacterium profundum (strain SS9).